We begin with the raw amino-acid sequence, 253 residues long: MNQVDLNCDLGESFGAYKIGLDEEILEFVTSANIACGFHAGDPGVMRKTVKMAAEKGVKIGAHPGLPDLAGFGRRNMAITPEEAYDLVVYQIGALSGFLKAEGVTMQHVKPHGALYNMAAQSRELSDAIARAVYQTDPELILFGLAGSELVLAGERAGLKTAHEVFADRTYQEDGTLTSRRQNDALIQDDDEAVGQVIRMVKEGKVRSLQGTDVSLKADTVCIHGDGAHALHFAKKIRRELRAADIKVQAFST.

The protein belongs to the LamB/PxpA family. In terms of assembly, forms a complex composed of PxpA, PxpB and PxpC.

It catalyses the reaction 5-oxo-L-proline + ATP + 2 H2O = L-glutamate + ADP + phosphate + H(+). Functionally, catalyzes the cleavage of 5-oxoproline to form L-glutamate coupled to the hydrolysis of ATP to ADP and inorganic phosphate. In Bacillus licheniformis (strain ATCC 14580 / DSM 13 / JCM 2505 / CCUG 7422 / NBRC 12200 / NCIMB 9375 / NCTC 10341 / NRRL NRS-1264 / Gibson 46), this protein is 5-oxoprolinase subunit A.